The chain runs to 298 residues: MFKSGFVAILGRPNVGKSTFLNHVMGQKIAIMSDKAQTTRNKIMGIYTTETEQIVFIDTPGIHKPKTALGDFMVESAYSTLREVETVLFMVPADEKRGKGDDMIIERLKAARIPVILVINKIDKVHPDQLLEQIDDFRSQMDFKEIVPISALQGNNVETLVQLLKDNLEEGFQYFPEDQITDHPERFLVSEMVREKVLHLTQQEVPHSVAVVVDSMKRDEVTDKVHIRVTIMVERDSQKGIIIGKQGAMLKKIGKLARRDIELMLGDKVYLETWVKVKKNWRDKKLDLADFGYNKKEY.

The region spanning 3–170 (KSGFVAILGR…VQLLKDNLEE (168 aa)) is the Era-type G domain. Positions 11-18 (GRPNVGKS) are G1. 11–18 (GRPNVGKS) contributes to the GTP binding site. Positions 37-41 (QTTRN) are G2. The G3 stretch occupies residues 58 to 61 (DTPG). Residues 58 to 62 (DTPGI) and 120 to 123 (NKID) contribute to the GTP site. The interval 120–123 (NKID) is G4. Residues 149-151 (ISA) form a G5 region. The KH type-2 domain maps to 201–279 (TQQEVPHSVA…YLETWVKVKK (79 aa)).

The protein belongs to the TRAFAC class TrmE-Era-EngA-EngB-Septin-like GTPase superfamily. Era GTPase family. As to quaternary structure, monomer.

Its subcellular location is the cytoplasm. The protein resides in the cell membrane. An essential GTPase that binds both GDP and GTP, with rapid nucleotide exchange. Plays a role in 16S rRNA processing and 30S ribosomal subunit biogenesis and possibly also in cell cycle regulation and energy metabolism. In Streptococcus equi subsp. zooepidemicus (strain MGCS10565), this protein is GTPase Era.